Reading from the N-terminus, the 446-residue chain is Exodeoxyribonuclease 7 large subunit (446 aa).

It belongs to the XseA family. As to quaternary structure, heterooligomer composed of large and small subunits.

The protein resides in the cytoplasm. It catalyses the reaction Exonucleolytic cleavage in either 5'- to 3'- or 3'- to 5'-direction to yield nucleoside 5'-phosphates.. Its function is as follows. Bidirectionally degrades single-stranded DNA into large acid-insoluble oligonucleotides, which are then degraded further into small acid-soluble oligonucleotides. In Vibrio cholerae serotype O1 (strain ATCC 39541 / Classical Ogawa 395 / O395), this protein is Exodeoxyribonuclease 7 large subunit.